A 2587-amino-acid chain; its full sequence is Protein KINKY POLLEN (2587 aa).

The N-terminal stretch at 1-27 (MAAFLVMFIFTIALFVALLWVFFKSLP) is a signal peptide. Asparagine 71 carries N-linked (GlcNAc...) asparagine glycosylation. Residues 103-124 (PSHSSKGPRKPKTRKSSSGGKG) form a disordered region. Residues 108–117 (KGPRKPKTRK) show a composition bias toward basic residues. 3 N-linked (GlcNAc...) asparagine glycosylation sites follow: asparagine 262, asparagine 281, and asparagine 485. The tract at residues 270-290 (SKGEVIDSSSGNTTSEKPPKQ) is disordered. The span at 276–285 (DSSSGNTTSE) shows a compositional bias: polar residues. Residues 589–611 (GSSSKNKQEKGAHRSKPPSGRGT) form a disordered region. Positions 691 to 716 (TLNKEIQSTQVELETAKAIYQEFLEE) form a coiled coil. Residues 784-814 (QHGNRNPEEASTVTGDKQKEEPTTTPNSLDK) are disordered. Residues asparagine 1155, asparagine 1250, asparagine 1281, and asparagine 1486 are each glycosylated (N-linked (GlcNAc...) asparagine). Disordered regions lie at residues 1571–1608 (HCSK…KHPD), 1646–1673 (VDAR…DGYN), and 1729–1797 (EGNQ…PEEE). Over residues 1576-1590 (AQMSRTSSLSGSTDR) the composition is skewed to polar residues. Asparagine 1595 carries N-linked (GlcNAc...) asparagine glycosylation. Over residues 1646–1666 (VDARSTKEKQSEPEENSHSDP) the composition is skewed to basic and acidic residues. Residues 1746–1760 (KQPSTGSGNLASQSK) show a composition bias toward polar residues. N-linked (GlcNAc...) asparagine glycans are attached at residues asparagine 1861, asparagine 1951, asparagine 1981, asparagine 2036, and asparagine 2278. Residues 2006–2036 (IEEVELAKIELEAKERDRMMLLDDIRKLTQN) are a coiled coil. Residues 2274 to 2287 (QGSKNQSLKSSTIR) are compositionally biased toward polar residues. Disordered regions lie at residues 2274 to 2299 (QGSK…TSSF), 2319 to 2360 (SMEH…KKSR), and 2442 to 2469 (KDDI…RPGD). Basic and acidic residues-rich tracts occupy residues 2289–2299 (SGRELRRTSSF), 2322–2336 (HQGE…DSKT), 2343–2359 (SVHE…DKKS), and 2442–2458 (KDDI…RTDQ). N-linked (GlcNAc...) asparagine glycans are attached at residues asparagine 2513 and asparagine 2544. The tract at residues 2533-2587 (IRRHSKKFQNQNTTKGSKKTQLSPTLSPPKEEDQYESDSSSGSSAYEEFLDQNQI) is disordered. A compositionally biased stretch (polar residues) spans 2540–2557 (FQNQNTTKGSKKTQLSPT). The segment covering 2569 to 2579 (SDSSSGSSAYE) has biased composition (low complexity).

It belongs to the SABRE family. Mostly expressed in pollen and roots, especially in tip-growing cells, but also present in seedlings, stems, leaves, buds, flowers, siliques and seeds.

It localises to the secreted. It is found in the golgi apparatus. May be involved in membrane trafficking. Required for tip growth in pollen tubes and root hairs. The protein is Protein KINKY POLLEN of Arabidopsis thaliana (Mouse-ear cress).